The chain runs to 822 residues: Aminopeptidase O (822 aa).

A Zn(2+)-binding site is contributed by H480. E481 serves as the catalytic Proton acceptor. Positions 484 and 503 each coordinate Zn(2+). A Nucleolar localization signal motif is present at residues R692–R702.

This sequence belongs to the peptidase M1 family. The cofactor is Zn(2+).

The protein resides in the nucleus. It localises to the nucleolus. Aminopeptidase which catalyzes the hydrolysis of amino acid residues from the N-terminus of peptide or protein substrates. The chain is Aminopeptidase O (Aopep) from Rattus norvegicus (Rat).